The sequence spans 183 residues: MRAACLFLLFMPGLLAQGQYDLDPLPPFPDHVQYNHYGDQIDNADYYDYQEVSPRTPEEQFQSQQQVQQEVIPAPTPEPAAAGDLETEPTEPGPLDCREEQYPCTRLYSIHKPCKQCLNEVCFYSLRRVYVVNKEICVRTVCAHEELLRADLCRDKFSKCGVMAVSGLCQSVAASCARSCGGC.

The segment at residues 1–16 (MRAACLFLLFMPGLLA) is a signal peptide (or 18). A Pyrrolidone carboxylic acid modification is found at Gln17. Residues Tyr46, Tyr47, and Tyr49 each carry the sulfotyrosine modification. The disordered stretch occupies residues 52 to 92 (VSPRTPEEQFQSQQQVQQEVIPAPTPEPAAAGDLETEPTEP). Residues 59–70 (EQFQSQQQVQQE) are compositionally biased toward low complexity. Residues 153 to 183 (CRDKFSKCGVMAVSGLCQSVAASCARSCGGC) form the ShKT domain. 3 disulfides stabilise this stretch: Cys153-Cys183, Cys160-Cys176, and Cys169-Cys180.

This sequence belongs to the MFAP family. In terms of assembly, forms a ternary complex with BGN and ELN. Interacts with FBN1 (via N-terminal domain) and FBN2. In terms of processing, forms intermolecular disulfide bonds either with other MAGP-1 molecules or with other components of the microfibrils. May form transglutaminase cross-links. O-glycosylated.

Its subcellular location is the secreted. It localises to the extracellular space. The protein localises to the extracellular matrix. Functionally, component of the elastin-associated microfibrils. The protein is Microfibrillar-associated protein 2 (Mfap2) of Mus musculus (Mouse).